A 735-amino-acid chain; its full sequence is Glutamine-dependent NAD(+) synthetase (735 aa).

In terms of domain architecture, CN hydrolase spans 4–274 (LRVATCNLNQ…VEVLDALVDL (271 aa)). Glu44 serves as the catalytic Proton acceptor; for glutaminase activity. Lys113 (for glutaminase activity) is an active-site residue. Cys174 (nucleophile; for glutaminase activity) is an active-site residue. Residues 324 to 711 (YHRPEEEIAF…STEGELRRRK (388 aa)) form a ligase region. 354-361 (PLSGGADS) serves as a coordination point for ATP. Ser356 is an active-site residue.

This sequence in the C-terminal section; belongs to the NAD synthetase family.

The enzyme catalyses deamido-NAD(+) + L-glutamine + ATP + H2O = L-glutamate + AMP + diphosphate + NAD(+) + H(+). It participates in cofactor biosynthesis; NAD(+) biosynthesis; NAD(+) from deamido-NAD(+) (L-Gln route): step 1/1. This Oryza sativa subsp. indica (Rice) protein is Glutamine-dependent NAD(+) synthetase.